Reading from the N-terminus, the 432-residue chain is Adenylosuccinate synthetase (432 aa).

GTP is bound by residues 12–18 (GDEGKGK) and 40–42 (GHT). Asp13 (proton acceptor) is an active-site residue. 2 residues coordinate Mg(2+): Asp13 and Gly40. Residues 13–16 (DEGK), 38–41 (NAGH), Thr132, Arg146, Gln226, Thr241, and Arg305 each bind IMP. His41 (proton donor) is an active-site residue. Substrate is bound at residue 301-307 (TVTGRKR). Residues Arg307, 333–335 (KLD), and 415–417 (STS) each bind GTP.

This sequence belongs to the adenylosuccinate synthetase family. In terms of assembly, homodimer. The cofactor is Mg(2+).

Its subcellular location is the cytoplasm. The enzyme catalyses IMP + L-aspartate + GTP = N(6)-(1,2-dicarboxyethyl)-AMP + GDP + phosphate + 2 H(+). It functions in the pathway purine metabolism; AMP biosynthesis via de novo pathway; AMP from IMP: step 1/2. Plays an important role in the de novo pathway of purine nucleotide biosynthesis. Catalyzes the first committed step in the biosynthesis of AMP from IMP. The chain is Adenylosuccinate synthetase from Chelativorans sp. (strain BNC1).